The sequence spans 388 residues: Chorismate synthase (388 aa).

NADP(+) contacts are provided by R39 and R45. Residues 132–134, 251–252, G296, 311–315, and R337 each bind FMN; these read RSS, NA, and KPIPT.

The protein belongs to the chorismate synthase family. In terms of assembly, homotetramer. The cofactor is FMNH2.

It carries out the reaction 5-O-(1-carboxyvinyl)-3-phosphoshikimate = chorismate + phosphate. Its pathway is metabolic intermediate biosynthesis; chorismate biosynthesis; chorismate from D-erythrose 4-phosphate and phosphoenolpyruvate: step 7/7. Catalyzes the anti-1,4-elimination of the C-3 phosphate and the C-6 proR hydrogen from 5-enolpyruvylshikimate-3-phosphate (EPSP) to yield chorismate, which is the branch point compound that serves as the starting substrate for the three terminal pathways of aromatic amino acid biosynthesis. This reaction introduces a second double bond into the aromatic ring system. This chain is Chorismate synthase, found in Staphylococcus carnosus (strain TM300).